The sequence spans 803 residues: Translation initiation factor IF-2 (803 aa).

Disordered regions lie at residues 95–125 (PVVE…EKAE) and 138–178 (EVKE…EREE). Residues 111-121 (VPLTSDTTNLN) show a composition bias toward polar residues. Basic and acidic residues predominate over residues 138-155 (EVKEEAKKTPSEKKETPK). Basic residues predominate over residues 156-167 (KGPRKETRRSRK). Residues 168-178 (PDKEDKWEREE) show a composition bias toward basic and acidic residues. In terms of domain architecture, tr-type G spans 302–471 (PRAPVVTIMG…LLQAEVLELK (170 aa)). Residues 311 to 318 (GHVDHGKT) are G1. Residue 311–318 (GHVDHGKT) coordinates GTP. Residues 336-340 (GITQH) form a G2 region. The tract at residues 357 to 360 (DTPG) is G3. GTP contacts are provided by residues 357 to 361 (DTPGH) and 411 to 414 (NKID). Positions 411–414 (NKID) are G4. Residues 447 to 449 (SAK) form a G5 region.

It belongs to the TRAFAC class translation factor GTPase superfamily. Classic translation factor GTPase family. IF-2 subfamily.

The protein resides in the cytoplasm. Its function is as follows. One of the essential components for the initiation of protein synthesis. Protects formylmethionyl-tRNA from spontaneous hydrolysis and promotes its binding to the 30S ribosomal subunits. Also involved in the hydrolysis of GTP during the formation of the 70S ribosomal complex. The sequence is that of Translation initiation factor IF-2 from Coxiella burnetii (strain Dugway 5J108-111).